The following is a 410-amino-acid chain: FBD-associated F-box protein At5g38590 (410 aa).

In terms of domain architecture, F-box spans 1-47 (MDKINGLPDDLLVKILSYVPTDIAVSTSILSKRWEFLWMWLPNLDYT). Residues 335-385 (GWNQPSSVPECLLSSLQIFKWPQYLGRPEDRDIAVYILKNARHLKKTTILA) enclose the FBD domain.

This is FBD-associated F-box protein At5g38590 from Arabidopsis thaliana (Mouse-ear cress).